The primary structure comprises 185 residues: Protein GrpE (185 aa).

Residues 1–40 form a disordered region; it reads MSEEKKDEILEQETVETKEEIKTEEAEQKTESLEEKVARL.

It belongs to the GrpE family. In terms of assembly, homodimer.

It is found in the cytoplasm. Functionally, participates actively in the response to hyperosmotic and heat shock by preventing the aggregation of stress-denatured proteins, in association with DnaK and GrpE. It is the nucleotide exchange factor for DnaK and may function as a thermosensor. Unfolded proteins bind initially to DnaJ; upon interaction with the DnaJ-bound protein, DnaK hydrolyzes its bound ATP, resulting in the formation of a stable complex. GrpE releases ADP from DnaK; ATP binding to DnaK triggers the release of the substrate protein, thus completing the reaction cycle. Several rounds of ATP-dependent interactions between DnaJ, DnaK and GrpE are required for fully efficient folding. The chain is Protein GrpE from Aliarcobacter butzleri (strain RM4018) (Arcobacter butzleri).